A 274-amino-acid polypeptide reads, in one-letter code: Elongation factor Ts (274 aa).

Residues 79–82 (TDFV) form an involved in Mg(2+) ion dislocation from EF-Tu region.

This sequence belongs to the EF-Ts family.

It localises to the cytoplasm. Its function is as follows. Associates with the EF-Tu.GDP complex and induces the exchange of GDP to GTP. It remains bound to the aminoacyl-tRNA.EF-Tu.GTP complex up to the GTP hydrolysis stage on the ribosome. This Aster yellows witches'-broom phytoplasma (strain AYWB) protein is Elongation factor Ts.